The primary structure comprises 377 residues: Hydrogenase maturation factor HypD (377 aa).

Fe cation is bound by residues Cys-41, Cys-69, and Cys-72.

This sequence belongs to the HypD family. It depends on [4Fe-4S] cluster as a cofactor.

It participates in protein modification; [NiFe] hydrogenase maturation. Functionally, involved in the maturation of [NiFe] hydrogenases. Involved in the biosynthesis of the Fe(CN)(2)CO cofactor. The protein is Hydrogenase maturation factor HypD of Rhodobacter capsulatus (Rhodopseudomonas capsulata).